Consider the following 326-residue polypeptide: Beta-ketoacyl-[acyl-carrier-protein] synthase III (326 aa).

Active-site residues include Cys-111 and His-252. The interval 253–257 (QANIR) is ACP-binding. Asn-282 is an active-site residue.

This sequence belongs to the thiolase-like superfamily. FabH family. Homodimer.

The protein resides in the plastid. Its subcellular location is the chloroplast. It catalyses the reaction malonyl-[ACP] + acetyl-CoA + H(+) = 3-oxobutanoyl-[ACP] + CO2 + CoA. Its pathway is lipid metabolism; fatty acid biosynthesis. Functionally, catalyzes the condensation reaction of fatty acid synthesis by the addition to an acyl acceptor of two carbons from malonyl-ACP. Catalyzes the first condensation reaction which initiates fatty acid synthesis and may therefore play a role in governing the total rate of fatty acid production. Possesses both acetoacetyl-ACP synthase and acetyl transacylase activities. Its substrate specificity determines the biosynthesis of branched-chain and/or straight-chain of fatty acids. This Porphyra purpurea (Red seaweed) protein is Beta-ketoacyl-[acyl-carrier-protein] synthase III.